The primary structure comprises 115 residues: U3-lycotoxin-Ls1v (115 aa).

An N-terminal signal peptide occupies residues 1-20 (MKFVLLFGVLLVTLFSHSSA). Positions 21 to 44 (EMLDDFDQADEDELLSLIEKEEAR) are excised as a propeptide. Intrachain disulfides connect Cys-48-Cys-63, Cys-55-Cys-72, Cys-62-Cys-87, and Cys-74-Cys-85.

It belongs to the neurotoxin 19 (CSTX) family. 01 subfamily. In terms of tissue distribution, expressed by the venom gland.

It localises to the secreted. The chain is U3-lycotoxin-Ls1v from Lycosa singoriensis (Wolf spider).